A 779-amino-acid polypeptide reads, in one-letter code: Aconitate hydratase, mitochondrial (779 aa).

The N-terminal 28 residues, 1 to 28 (MIAMDRIARIPIARWTSRAFRVSAAARQ), are a transit peptide targeting the mitochondrion. Residues Gln-97 and 190–192 (DSH) each bind substrate. [4Fe-4S] cluster contacts are provided by Cys-383, Cys-446, and Cys-449. Substrate is bound by residues Arg-472, Arg-477, Arg-605, and 668–669 (SR).

It belongs to the aconitase/IPM isomerase family. Monomer. [4Fe-4S] cluster is required as a cofactor.

It localises to the mitochondrion. It carries out the reaction citrate = D-threo-isocitrate. It participates in carbohydrate metabolism; tricarboxylic acid cycle; isocitrate from oxaloacetate: step 2/2. Its function is as follows. Catalyzes the isomerization of citrate to isocitrate via cis-aconitate. This Gracilaria gracilis (Red alga) protein is Aconitate hydratase, mitochondrial.